The primary structure comprises 472 residues: Adenosylhomocysteinase (472 aa).

The substrate site is built by Thr-61, Asp-139, and Glu-198. 199–201 contacts NAD(+); that stretch reads TTT. Substrate is bound by residues Lys-228 and Asp-232. NAD(+) is bound by residues Asn-233, 262 to 267, Glu-285, Asn-320, 341 to 343, and Asn-386; these read GFGDVG and IGH.

Belongs to the adenosylhomocysteinase family. NAD(+) serves as cofactor.

It localises to the cytoplasm. The catalysed reaction is S-adenosyl-L-homocysteine + H2O = L-homocysteine + adenosine. It functions in the pathway amino-acid biosynthesis; L-homocysteine biosynthesis; L-homocysteine from S-adenosyl-L-homocysteine: step 1/1. May play a key role in the regulation of the intracellular concentration of adenosylhomocysteine. The polypeptide is Adenosylhomocysteinase (Sphingopyxis alaskensis (strain DSM 13593 / LMG 18877 / RB2256) (Sphingomonas alaskensis)).